The primary structure comprises 160 residues: Nucleotide-binding protein CBU_0114 (160 aa).

Belongs to the YajQ family.

Nucleotide-binding protein. This chain is Nucleotide-binding protein CBU_0114, found in Coxiella burnetii (strain RSA 493 / Nine Mile phase I).